A 439-amino-acid polypeptide reads, in one-letter code: Ornithine aminotransferase, mitochondrial (439 aa).

A mitochondrion; in hepatic form-targeting transit peptide spans 1 to 25 (MFSKLAHLQRFAVLSRGVHSSVASA). A mitochondrion; in renal form-targeting transit peptide spans 1 to 35 (MFSKLAHLQRFAVLSRGVHSSVASATSVATKKTVQ). Residues lysine 49 and lysine 66 each carry the N6-acetyllysine modification. Position 102 is an N6-succinyllysine (lysine 102). Lysine 107 is modified (N6-acetyllysine; alternate). Lysine 107 is modified (N6-succinyllysine; alternate). An N6-(pyridoxal phosphate)lysine modification is found at lysine 292. An N6-acetyllysine; alternate modification is found at lysine 362. Lysine 362 is modified (N6-succinyllysine; alternate). Lysine 386 and lysine 392 each carry N6-acetyllysine. An N6-acetyllysine; alternate modification is found at lysine 405. At lysine 405 the chain carries N6-succinyllysine; alternate. Residue lysine 421 is modified to N6-acetyllysine.

It belongs to the class-III pyridoxal-phosphate-dependent aminotransferase family. As to quaternary structure, homohexamer. Requires pyridoxal 5'-phosphate as cofactor.

It localises to the mitochondrion matrix. The enzyme catalyses L-ornithine + 2-oxoglutarate = L-glutamate 5-semialdehyde + L-glutamate. The protein operates within amino-acid biosynthesis; L-proline biosynthesis; L-glutamate 5-semialdehyde from L-ornithine: step 1/1. Functionally, catalyzes the reversible interconversion of L-ornithine and 2-oxoglutarate to L-glutamate semialdehyde and L-glutamate. This is Ornithine aminotransferase, mitochondrial (OAT) from Homo sapiens (Human).